The chain runs to 441 residues: Putative F-box/FBD/LRR-repeat protein At4g00315 (441 aa).

The 47-residue stretch at 1 to 47 (MDKTSQLPDELLVKVLSFLPTKDAVRTSLLSMRWKSLWMWLPKLEYD) folds into the F-box domain. 8 LRR repeats span residues 57 to 82 (QGLA…SLKL), 87 to 115 (IGSI…SLKL), 137 to 164 (ILKL…FLGR), 165 to 190 (VTYS…VVER), 211 to 236 (LKMS…KVTD), 243 to 271 (SDNE…DFVL), 293 to 318 (LGVY…KICS), and 319 to 344 (CDSD…EAYV). The FBD domain maps to 358-410 (QWGNQLNCVPKCLLSSLETFKWSEMYGLLQNQMDVAKYILRNARCLKSATIFF).

The chain is Putative F-box/FBD/LRR-repeat protein At4g00315 from Arabidopsis thaliana (Mouse-ear cress).